A 259-amino-acid polypeptide reads, in one-letter code: 3-deoxy-manno-octulosonate cytidylyltransferase (259 aa).

Belongs to the KdsB family.

It localises to the cytoplasm. The enzyme catalyses 3-deoxy-alpha-D-manno-oct-2-ulosonate + CTP = CMP-3-deoxy-beta-D-manno-octulosonate + diphosphate. It functions in the pathway nucleotide-sugar biosynthesis; CMP-3-deoxy-D-manno-octulosonate biosynthesis; CMP-3-deoxy-D-manno-octulosonate from 3-deoxy-D-manno-octulosonate and CTP: step 1/1. It participates in bacterial outer membrane biogenesis; lipopolysaccharide biosynthesis. In terms of biological role, activates KDO (a required 8-carbon sugar) for incorporation into bacterial lipopolysaccharide in Gram-negative bacteria. The chain is 3-deoxy-manno-octulosonate cytidylyltransferase from Actinobacillus succinogenes (strain ATCC 55618 / DSM 22257 / CCUG 43843 / 130Z).